Consider the following 528-residue polypeptide: Drimenol cyclase drtB (528 aa).

Belongs to the HAD-like hydrolase superfamily.

The enzyme catalyses (2E,6E)-farnesyl diphosphate + H2O = (5S,9S,10S)-drim-7-en-11-ol + diphosphate. The protein operates within secondary metabolite biosynthesis; terpenoid biosynthesis. Drimenol cyclase; part of the gene cluster that mediates the biosynthesis of various drimane-type sesquiterpene esters, compounds that exhibit diverse biological activities and are widely present in eukaryotes. The pathway begins with the synthesis of the backbone drimenol by the terpene cyclase drtB using farnesyl pyrophosphate (FPP) as substrate. The cytochrome P450 monooxygenase drtD is then responsible for the hydroxylations at C-6, C-9 and C-12, as well as the oxidation of hydroxyl groups at C-6 and C-11 to a ketone and an aldehyde, respectively. Then, the biosynthesis can go in two directions, either the hydroxylated drimenol is further hydroxylated at C-2 and C-3 by an enzyme(s) not associated with the drt cluster, or the FAD-binding oxidoreductase drtC further oxidizes C-11 or C-12 to form the butyrolactone ring. DrtB, drtD and drtC are solely responsible for the formation of the different drimane structures observed during drimane sesquiterpenes biosynthesis. The polyketide synthase drtA synthesizes different lengths (C6 and C8) of PKS chains, which are then oxidized to varying degrees by the short-chain dehydrogenase drtF. Finally, these PKS chains are transferred onto drimane sesquiterpenes by the acyltransferase drtE, forming the sesquiterpene esters. In addition to the different fatty acyl-CoA chains produced by drtA, drtE is also able to use cinnamoyl-CoA as a substrate. This Aspergillus calidoustus protein is Drimenol cyclase drtB.